A 665-amino-acid chain; its full sequence is E3 ubiquitin-protein ligase cblA (665 aa).

The disordered stretch occupies residues 30-50; that stretch reads NNNNNINNNNNNNNINSNNNG. The tract at residues 109 to 231 is 4H; it reads TSLVNYIHYE…NNENNNNNNN (123 aa). In terms of domain architecture, Cbl-PTB spans 109-400; the sequence is TSLVNYIHYE…PDIFKSILSF (292 aa). An EF-hand-like region spans residues 232–306; sequence NYNPYELLSN…FKLSVFIKWF (75 aa). The Ca(2+) site is built by D287, T289, D291, and Y293. The segment at 307-400 is SH2-like; it reads GALPVSLGIF…PDIFKSILSF (94 aa). 2 disordered regions span residues 437–456 and 467–609; these read ENNN…INTF and DSSN…NNNN. Positions 467-478 are enriched in low complexity; that stretch reads DSSNSSDTNKSP. The stretch at 479-544 forms a coiled coil; the sequence is TKSRKSSFKN…NNNNNNNNNN (66 aa). A compositionally biased stretch (basic and acidic residues) spans 486 to 512; the sequence is FKNDKDKKEKEKEKGKDKEKEKERVSD. Composition is skewed to low complexity over residues 530-561 and 571-609; these read NNNN…NNNN and TSNG…NNNN. An RING-type zinc finger spans residues 618–653; sequence CTVCMDNEINTVFLECGHLSCCSLCSVKLKKCPICR.

Post-translationally, ubiquitinated.

The protein localises to the cytoplasm. It localises to the nucleus. It carries out the reaction S-ubiquitinyl-[E2 ubiquitin-conjugating enzyme]-L-cysteine + [acceptor protein]-L-lysine = [E2 ubiquitin-conjugating enzyme]-L-cysteine + N(6)-ubiquitinyl-[acceptor protein]-L-lysine.. It functions in the pathway protein modification; protein ubiquitination. Functionally, acts as an E3 ubiquitin-protein ligase, which accepts ubiquitin from specific E2 ubiquitin-conjugating enzymes, and then transfers it to substrates promoting their degradation by the proteasome. Up-regulates STATc tyrosine phosphorylation via an inhibitory effect on ptpC accumulation. Recognizes activated receptor tyrosine kinases, RTKs and terminates signaling. This Dictyostelium discoideum (Social amoeba) protein is E3 ubiquitin-protein ligase cblA (cblA-1).